The following is a 536-amino-acid chain: CTP synthase (536 aa).

An amidoligase domain region spans residues 1 to 268; the sequence is MSFKSIFLTG…VDFLLSKFGF (268 aa). Position 14 (Ser-14) interacts with CTP. Ser-14 serves as a coordination point for UTP. 15-20 serves as a coordination point for ATP; it reads SLGKGL. Tyr-55 is a binding site for L-glutamine. Asp-72 provides a ligand contact to ATP. Mg(2+)-binding residues include Asp-72 and Glu-142. Residues 149 to 151, 188 to 193, and Lys-224 each bind CTP; these read DIE and KTKPTQ. UTP-binding positions include 188-193 and Lys-224; that span reads KTKPTQ. The 239-residue stretch at 294-532 folds into the Glutamine amidotransferase type-1 domain; sequence RIGLVGKYLE…LSAALDYSLE (239 aa). L-glutamine is bound at residue Gly-353. Cys-380 functions as the Nucleophile; for glutamine hydrolysis in the catalytic mechanism. L-glutamine is bound by residues 381-384, Glu-404, and Arg-460; that span reads LGMQ. Active-site residues include His-505 and Glu-507.

This sequence belongs to the CTP synthase family. Homotetramer.

It carries out the reaction UTP + L-glutamine + ATP + H2O = CTP + L-glutamate + ADP + phosphate + 2 H(+). The enzyme catalyses L-glutamine + H2O = L-glutamate + NH4(+). The catalysed reaction is UTP + NH4(+) + ATP = CTP + ADP + phosphate + 2 H(+). It functions in the pathway pyrimidine metabolism; CTP biosynthesis via de novo pathway; CTP from UDP: step 2/2. Its activity is regulated as follows. Allosterically activated by GTP, when glutamine is the substrate; GTP has no effect on the reaction when ammonia is the substrate. The allosteric effector GTP functions by stabilizing the protein conformation that binds the tetrahedral intermediate(s) formed during glutamine hydrolysis. Inhibited by the product CTP, via allosteric rather than competitive inhibition. Catalyzes the ATP-dependent amination of UTP to CTP with either L-glutamine or ammonia as the source of nitrogen. Regulates intracellular CTP levels through interactions with the four ribonucleotide triphosphates. This is CTP synthase from Chlamydia muridarum (strain MoPn / Nigg).